The chain runs to 123 residues: Guanine nucleotide exchange factor MSS4 (123 aa).

The residue at position 1 (M1) is an N-acetylmethionine. One can recognise an MSS4 domain in the interval 9 to 123 (ELVSAEGRNR…YVALERVSHE (115 aa)). Zn(2+)-binding residues include C23, C26, C94, and C97.

It belongs to the DSS4/MSS4 family. In terms of assembly, interacts with RAB8A.

Its function is as follows. Guanine-nucleotide-releasing protein that acts on members of the SEC4/YPT1/RAB subfamily. Stimulates GDP release from both YPT1, RAB3A and RAB10, but is less active on these proteins than on the SEC4 protein. Might play a general role in vesicular transport. The sequence is that of Guanine nucleotide exchange factor MSS4 from Mus musculus (Mouse).